Consider the following 757-residue polypeptide: Mitofusin-2 (757 aa).

Residues 1 to 604 (MSLLFSRCNS…TQEELMVSMV (604 aa)) lie on the Cytoplasmic side of the membrane. Positions 30–94 (KHFVTAKKKI…VRGISEVLAR (65 aa)) are part of a helix bundle domain, formed by helices from N-terminal and C-terminal regions. The Dynamin-type G domain maps to 93-342 (ARRHMKVAFF…VRMFEFQNFE (250 aa)). A G1 motif region spans residues 103–110 (GRTSNGKS). 106–111 (SNGKST) contacts GTP. Thr111 carries the post-translational modification Phosphothreonine; by PINK1. The tract at residues 129–130 (TT) is G2 motif. The tract at residues 199 to 202 (DSPG) is G3 motif. 258-261 (NRWD) is a binding site for GTP. Residues 258-261 (NRWD) form a G4 motif region. Glu288 is a region of interest (G5 motif). GTP-binding residues include Ser305 and Lys307. The part of a helix bundle domain, formed by helices from N-terminal and C-terminal regions stretch occupies residues 359–385 (EQHTVRAKQIAEAVRLIMDSLHIAAQE). A coiled-coil region spans residues 406–435 (KQLELLAQDYKLRIKQMTEEVERQVSTAMA). Ser442 is subject to Phosphoserine; by PINK1. A helical membrane pass occupies residues 605–625 (TGLASLTSRTSMGILVVGGVV). Position 626 (Trp626) is a topological domain, mitochondrial intermembrane. A helical transmembrane segment spans residues 627 to 647 (KAVGWRLIALSFGLYGLLYVY). The Cytoplasmic segment spans residues 648-757 (ERLTWTTRAK…FIHQYLQPSR (110 aa)). A coiled-coil region spans residues 696 to 738 (FAHLCQQVDITRDNLEQEIAAMNKKVEALDSLQSKAKLLRNKA). The part of a helix bundle domain, formed by helices from N-terminal and C-terminal regions stretch occupies residues 722 to 753 (EALDSLQSKAKLLRNKAGWLDSELNMFIHQYL).

It belongs to the TRAFAC class dynamin-like GTPase superfamily. Dynamin/Fzo/YdjA family. Mitofusin subfamily. In terms of assembly, forms homomultimers and heteromultimers with MFN1. Oligomerization is essential for mitochondrion fusion. Interacts with VAT1. Interacts with STOML2; may form heterooligomers. Interacts (phosphorylated) with PRKN. Interacts with EIF2AK3. Interacts with THG1L; THG1L probably functions as a guanyl-nucleotide exchange factor/GEF, activating MFN2. Phosphorylated by PINK1. Post-translationally, ubiquitinated by non-degradative ubiquitin by PRKN, promoting mitochondrial fusion; deubiquitination by USP30 inhibits mitochondrial fusion. Ubiquitinated by HUWE1 when dietary stearate (C18:0) levels are low; ubiquitination inhibits mitochondrial fusion. In terms of tissue distribution, ubiquitous. In brain, it is more expressed than MFN1, while it is expressed at a weaker level than MFN1 in heart and testis. Expressed at high level in elongating spermatids of seminiferous tubules. Expression is markedly down-regulated in highly proliferative vascular smooth muscle cells (VSMCs) from the genetic hypertensive animal model SHR, as well as in balloon-injured Wistar Kyoto arteries.

It is found in the mitochondrion outer membrane. It carries out the reaction GTP + H2O = GDP + phosphate + H(+). Functionally, mitochondrial outer membrane GTPase that mediates mitochondrial clustering and fusion. Mitochondria are highly dynamic organelles, and their morphology is determined by the equilibrium between mitochondrial fusion and fission events. Overexpression induces the formation of mitochondrial networks. Membrane clustering requires GTPase activity and may involve a major rearrangement of the coiled coil domains. Plays a central role in mitochondrial metabolism and may be associated with obesity and/or apoptosis processes. Plays an important role in the regulation of vascular smooth muscle cell proliferation. Involved in the clearance of damaged mitochondria via selective autophagy (mitophagy). Is required for PRKN recruitment to dysfunctional mitochondria. Involved in the control of unfolded protein response (UPR) upon ER stress including activation of apoptosis and autophagy during ER stress. Acts as an upstream regulator of EIF2AK3 and suppresses EIF2AK3 activation under basal conditions. The polypeptide is Mitofusin-2 (Mfn2) (Rattus norvegicus (Rat)).